The following is a 678-amino-acid chain: Growth arrest-specific protein 6 (678 aa).

The first 30 residues, 1–30 (MAPSLSPGPAALRRAPQLLLLLLAAECALA), serve as a signal peptide directing secretion. Residues 53–94 (FEEAKQGHLERECVEELCSREEAREVFENDPETDYFYPRYLD) enclose the Gla domain. An intrachain disulfide couples cysteine 65 to cysteine 70. Position 71 is a phosphoserine; by FAM20C (serine 71). Positions 116-154 (LPDQCTPNPCDRKGTQACQDLMGNFFCLCKAGWGGRLCD) constitute an EGF-like 1; calcium-binding domain. Disulfide bonds link cysteine 120/cysteine 133, cysteine 125/cysteine 142, cysteine 144/cysteine 153, cysteine 160/cysteine 171, cysteine 167/cysteine 180, cysteine 182/cysteine 195, cysteine 201/cysteine 212, cysteine 207/cysteine 221, cysteine 223/cysteine 236, cysteine 242/cysteine 251, cysteine 247/cysteine 260, cysteine 262/cysteine 277, cysteine 283/cysteine 570, and cysteine 444/cysteine 470. An EGF-like 2; calcium-binding domain is found at 156–196 (DVNECSQENGGCLQICHNKPGSFHCSCHSGFELSSDGRTCQ). Positions 197–237 (DIDECADSEACGEARCKNLPGSYSCLCDEGFAYSSQEKACR) constitute an EGF-like 3; calcium-binding domain. One can recognise an EGF-like 4; calcium-binding domain in the interval 238–278 (DVDECLQGRCEQVCVNSPGSYTCHCDGRGGLKLSQDMDTCE). 2 Laminin G-like domains span residues 298-470 (GRMF…RMQC) and 477-670 (GSFY…AHSC). Residues aspartate 329 and glutamate 331 each contribute to the Ca(2+) site. Residue asparagine 420 is glycosylated (N-linked (GlcNAc...) asparagine). Arginine 440 is a Ca(2+) binding site. Threonine 621 and threonine 637 each carry phosphothreonine. A Phosphotyrosine modification is found at tyrosine 640. Cysteine 643 and cysteine 670 are oxidised to a cystine. A Ca(2+)-binding site is contributed by aspartate 656.

In terms of assembly, heterodimer and heterotetramer with AXL. Proteolytically processed after secretion to yield a N-terminal 36 kDa protein and a C-terminal 50 kDa protein including the laminin G-like domains which activates AXL. Post-translationally, gamma-carboxyglutamate residues are formed by vitamin K dependent carboxylation. These residues are essential for the binding of calcium. Plasma. Isoform 1 and isoform 2 are widely expressed, isoform 1 being expressed at higher levels than isoform 2 in most tissues. Isoform 2 is the predominant form in spleen.

It localises to the secreted. Functionally, ligand for tyrosine-protein kinase receptors AXL, TYRO3 and MER whose signaling is implicated in cell growth and survival, cell adhesion and cell migration. GAS6/AXL signaling plays a role in various processes such as endothelial cell survival during acidification by preventing apoptosis, optimal cytokine signaling during human natural killer cell development, hepatic regeneration, gonadotropin-releasing hormone neuron survival and migration, platelet activation, or regulation of thrombotic responses. (Microbial infection) Can bridge virus envelope phosphatidylserine to the TAM receptor tyrosine kinase Axl to mediate viral entry by apoptotic mimicry. Plays a role in Dengue cell entry by apoptotic mimicry. Plays a role in Vaccinia virus cell entry by apoptotic mimicry. Plays a role in ebolavirus and marburgvirus cell entry by apoptotic mimicry. The sequence is that of Growth arrest-specific protein 6 from Homo sapiens (Human).